A 202-amino-acid polypeptide reads, in one-letter code: MKQLIFLLICLSCGTCSIYALKCRSQEGLSEAELKRTVRNCMHRQDEDEDRGRGGQGRQGNGYEYGYGMDHDQEEQDRNPGNRGGYGNRRQRGLRQSDGRNHTSNDGGQCVAQCFFEEMNMVDGNGMPDRRKVSYLLTKDLRDRELRNFFTDTVQQCFRYLESNGRGRHHKCSAARELVKCMSEYAKAQCEDWEEHGNMLFN.

An N-terminal signal peptide occupies residues 1 to 20; sequence MKQLIFLLICLSCGTCSIYA. Over residues 43 to 53 the composition is skewed to basic and acidic residues; that stretch reads HRQDEDEDRGR. The segment at 43–105 is disordered; that stretch reads HRQDEDEDRG…QSDGRNHTSN (63 aa). Over residues 54-65 the composition is skewed to gly residues; it reads GGQGRQGNGYEY.

Belongs to the PBP/GOBP family. As to expression, expressed in non-neuronal cells in hygrosensitive sensilla in the second chamber of the sacculus of the antenna third segment (at protein level).

Its subcellular location is the secreted. In terms of biological role, odorant-binding protein required for hygrotaxis behavior in humidity-detecting sensilla. The polypeptide is Odorant-binding protein 59a (Drosophila melanogaster (Fruit fly)).